The sequence spans 155 residues: SsrA-binding protein (155 aa).

It belongs to the SmpB family.

Its subcellular location is the cytoplasm. Functionally, required for rescue of stalled ribosomes mediated by trans-translation. Binds to transfer-messenger RNA (tmRNA), required for stable association of tmRNA with ribosomes. tmRNA and SmpB together mimic tRNA shape, replacing the anticodon stem-loop with SmpB. tmRNA is encoded by the ssrA gene; the 2 termini fold to resemble tRNA(Ala) and it encodes a 'tag peptide', a short internal open reading frame. During trans-translation Ala-aminoacylated tmRNA acts like a tRNA, entering the A-site of stalled ribosomes, displacing the stalled mRNA. The ribosome then switches to translate the ORF on the tmRNA; the nascent peptide is terminated with the 'tag peptide' encoded by the tmRNA and targeted for degradation. The ribosome is freed to recommence translation, which seems to be the essential function of trans-translation. This Bacillus cereus (strain 03BB102) protein is SsrA-binding protein.